Here is a 25-residue protein sequence, read N- to C-terminus: Neuromedin-U-25 (25 aa).

Asn-25 carries the asparagine amide modification.

The protein belongs to the NmU family.

It is found in the secreted. Stimulates uterine smooth muscle contraction and causes selective vasoconstriction. This Oryctolagus cuniculus (Rabbit) protein is Neuromedin-U-25 (NMU).